A 345-amino-acid polypeptide reads, in one-letter code: Ryncolin-4 (345 aa).

A signal peptide spans 1–19 (MKPWAAFHLIFLVASSLEG). The interval 48–118 (ILQSQPGIPG…DKGDKGEDCN (71 aa)) is disordered. The Collagen-like domain maps to 57-114 (GIPGVPGTNGSEGLKGDPGPQGPPGIRGPDGIRGEAGPKGDKGDQGDKGDKGDKGDKG). The segment covering 86–116 (DGIRGEAGPKGDKGDQGDKGDKGDKGDKGED) has biased composition (basic and acidic residues). Residues 121–339 (DCLPTEVRNC…YADMKIRPQK (219 aa)) enclose the Fibrinogen C-terminal domain. Intrachain disulfides connect Cys130–Cys158 and Cys282–Cys295.

The protein belongs to the ficolin lectin family. Veficolin subfamily. Hydroxylated, possibly at Pro-80. Expressed by the venom duct.

It localises to the secreted. Functionally, initiates complement activation and/or interferes in platelet aggregation and/or blood coagulation. This chain is Ryncolin-4, found in Cerberus rynchops (Dog-faced water snake).